The following is a 462-amino-acid chain: Argininosuccinate lyase (462 aa).

The protein belongs to the lyase 1 family. Argininosuccinate lyase subfamily.

Its subcellular location is the cytoplasm. The catalysed reaction is 2-(N(omega)-L-arginino)succinate = fumarate + L-arginine. Its pathway is amino-acid biosynthesis; L-arginine biosynthesis; L-arginine from L-ornithine and carbamoyl phosphate: step 3/3. The chain is Argininosuccinate lyase from Bacillus cereus (strain ZK / E33L).